The primary structure comprises 89 residues: Small ribosomal subunit protein bS16c (89 aa).

Belongs to the bacterial ribosomal protein bS16 family.

It localises to the plastid. It is found in the chloroplast. This chain is Small ribosomal subunit protein bS16c, found in Morus indica (Mulberry).